Here is a 126-residue protein sequence, read N- to C-terminus: Large ribosomal subunit protein bL12 (126 aa).

Basic and acidic residues predominate over residues 107 to 116 (EDAEKAKSQL). The interval 107-126 (EDAEKAKSQLEEAGATVELK) is disordered.

This sequence belongs to the bacterial ribosomal protein bL12 family. Homodimer. Part of the ribosomal stalk of the 50S ribosomal subunit. Forms a multimeric L10(L12)X complex, where L10 forms an elongated spine to which 2 to 4 L12 dimers bind in a sequential fashion. Binds GTP-bound translation factors.

Functionally, forms part of the ribosomal stalk which helps the ribosome interact with GTP-bound translation factors. Is thus essential for accurate translation. The sequence is that of Large ribosomal subunit protein bL12 from Bifidobacterium adolescentis (strain ATCC 15703 / DSM 20083 / NCTC 11814 / E194a).